Consider the following 408-residue polypeptide: DNA primase DnaG (408 aa).

Positions 165 to 243 (PELIIVEGRA…KIDYVARAPT (79 aa)) constitute a Toprim domain. Mg(2+) contacts are provided by glutamate 171, aspartate 216, and aspartate 218.

This sequence belongs to the archaeal DnaG primase family. As to quaternary structure, forms a ternary complex with MCM helicase and DNA. Component of the archaeal exosome complex. The cofactor is Mg(2+).

The enzyme catalyses ssDNA + n NTP = ssDNA/pppN(pN)n-1 hybrid + (n-1) diphosphate.. In terms of biological role, RNA polymerase that catalyzes the synthesis of short RNA molecules used as primers for DNA polymerase during DNA replication. Also part of the exosome, which is a complex involved in RNA degradation. Acts as a poly(A)-binding protein that enhances the interaction between heteromeric, adenine-rich transcripts and the exosome. This chain is DNA primase DnaG, found in Sulfurisphaera tokodaii (strain DSM 16993 / JCM 10545 / NBRC 100140 / 7) (Sulfolobus tokodaii).